Here is a 254-residue protein sequence, read N- to C-terminus: 5-oxoprolinase subunit A (254 aa).

The protein belongs to the LamB/PxpA family. Forms a complex composed of PxpA, PxpB and PxpC.

It catalyses the reaction 5-oxo-L-proline + ATP + 2 H2O = L-glutamate + ADP + phosphate + H(+). Functionally, catalyzes the cleavage of 5-oxoproline to form L-glutamate coupled to the hydrolysis of ATP to ADP and inorganic phosphate. The sequence is that of 5-oxoprolinase subunit A from Rhodopseudomonas palustris (strain BisB5).